Here is a 512-residue protein sequence, read N- to C-terminus: Mucin-13 (512 aa).

Residues 1-18 (MKAIIHLTLLALLSVNTA) form the signal peptide. The Extracellular portion of the chain corresponds to 19-421 (TNQGNSADAV…GLDCKDKFQL (403 aa)). Residues 22-38 (GNSADAVTTTETATSGP) are compositionally biased toward polar residues. 2 disordered regions span residues 22–67 (GNSA…PTAT) and 133–176 (MVPS…PSNP). The span at 53–67 (TASTTANTPSFPTAT) shows a compositional bias: low complexity. Polar residues predominate over residues 135–176 (PSETQSNNEMSPTTEDNQSSGPPTGTALLETSTLNSTGPSNP). N-linked (GlcNAc...) asparagine glycans are attached at residues Asn151 and Asn169. In terms of domain architecture, EGF-like 1 spans 173 to 211 (PSNPCQDDPCADNSLCVKLHNTSFCLCLEGYYYNSSTCK). Disulfide bonds link Cys177-Cys188, Cys182-Cys197, and Cys199-Cys210. 4 N-linked (GlcNAc...) asparagine glycosylation sites follow: Asn193, Asn206, Asn284, and Asn332. Positions 212–336 (KGKVFPGKIS…DYYGCNQTAD (125 aa)) constitute an SEA domain. EGF-like domains are found at residues 322 to 361 (LTLR…PFCV) and 363 to 404 (SSLK…GNCQ). Cystine bridges form between Cys326–Cys338, Cys331–Cys344, Cys346–Cys360, Cys367–Cys378, Cys371–Cys389, and Cys391–Cys403. The helical transmembrane segment at 422–442 (ILTIVGTIAGIVILSMIIALI) threads the bilayer. Topologically, residues 443 to 512 (VTARSNNKTK…RHSSMPRPDY (70 aa)) are cytoplasmic. Positions 493–505 (RDSQMQNPYSRHS) are enriched in polar residues. The tract at residues 493 to 512 (RDSQMQNPYSRHSSMPRPDY) is disordered.

In terms of assembly, homodimer of beta subunits. Cleaved into two subunits, alpha and beta, probably between the first EGF domain and the SEA domain. Beta subunit contains the cytoplasmic tail and alpha subunit the extracellular tail. The homooligomerization into dimers is dependent on intrachain disulfide bonds. Post-translationally, highly N-glycosylated. Highly expressed in epithelial tissues, particularly those of the gastrointestinal and respiratory tracts, such as large intestine and trachea, followed by kidney, small intestine, appendix and stomach.

The protein localises to the cell membrane. It localises to the apical cell membrane. It is found in the secreted. Epithelial and hemopoietic transmembrane mucin that may play a role in cell signaling. The polypeptide is Mucin-13 (MUC13) (Homo sapiens (Human)).